The following is a 223-amino-acid chain: UPF0502 protein Avin_04790 (223 aa).

It belongs to the UPF0502 family.

In Azotobacter vinelandii (strain DJ / ATCC BAA-1303), this protein is UPF0502 protein Avin_04790.